A 136-amino-acid polypeptide reads, in one-letter code: Keratin-associated protein 9-3 (136 aa).

A run of 11 repeats spans residues 3-7, 21-25, 31-35, 36-40, 41-45, 46-50, 87-91, 97-101, 107-111, 117-121, and 126-130. Residues 21–130 are 11 X 5 AA repeats of C-C-[AEQVR]-[ALPTV]-[AGHST]; it reads CCQPTCTQSS…ACCCYCCQPS (110 aa).

Belongs to the KRTAP type 9 family. Interacts with hair keratins.

Its function is as follows. In the hair cortex, hair keratin intermediate filaments are embedded in an interfilamentous matrix, consisting of hair keratin-associated proteins (KRTAP), which are essential for the formation of a rigid and resistant hair shaft through their extensive disulfide bond cross-linking with abundant cysteine residues of hair keratins. The matrix proteins include the high-sulfur and high-glycine-tyrosine keratins. This is Keratin-associated protein 9-3 from Mus musculus (Mouse).